The chain runs to 821 residues: Lon protease (821 aa).

The 199-residue stretch at 18-216 folds into the Lon N-terminal domain; the sequence is LPLMSLREVV…KVYELLQGEI (199 aa). 368-375 serves as a coordination point for ATP; it reads GPPGVGKT. The Lon proteolytic domain occupies 606-787; the sequence is TSQVGVCTGL…DEVLPQALMA (182 aa). Active-site residues include serine 693 and lysine 736.

Belongs to the peptidase S16 family. In terms of assembly, homohexamer. Organized in a ring with a central cavity.

The protein localises to the cytoplasm. It carries out the reaction Hydrolysis of proteins in presence of ATP.. Its function is as follows. ATP-dependent serine protease that mediates the selective degradation of mutant and abnormal proteins as well as certain short-lived regulatory proteins. Required for cellular homeostasis and for survival from DNA damage and developmental changes induced by stress. Degrades polypeptides processively to yield small peptide fragments that are 5 to 10 amino acids long. Binds to DNA in a double-stranded, site-specific manner. This chain is Lon protease, found in Nitratidesulfovibrio vulgaris (strain ATCC 29579 / DSM 644 / CCUG 34227 / NCIMB 8303 / VKM B-1760 / Hildenborough) (Desulfovibrio vulgaris).